The sequence spans 1123 residues: Polyprotein of EF-Ts, chloroplastic (1123 aa).

The transit peptide at 1 to 73 directs the protein to the chloroplast; that stretch reads MTPVVHCSVG…SSARRPRTLS (73 aa). The segment at 68-141 is disordered; it reads RPRTLSAATV…MPPLNDEDLV (74 aa). The segment covering 94 to 103 has biased composition (acidic residues); sequence TSEESSEDTA. Over residues 106–119 the composition is skewed to low complexity; it reads TAEASEQAEASTSS. In terms of domain architecture, S1 motif 1 spans 143 to 212; the sequence is GASFTGKVRS…ETGRISLTMR (70 aa). The disordered stretch occupies residues 213–258; the sequence is TGGDYVKPKTETPKAASGGRNTTATTSRGSPRQTRERDEAKSMGET. Positions 231–244 are enriched in polar residues; it reads GRNTTATTSRGSPR. The segment covering 245–254 has biased composition (basic and acidic residues); it reads QTRERDEAKS. In terms of domain architecture, S1 motif 2 spans 263-331; sequence GQFLDGVVKN…VRGQVTLTMK (69 aa). Disordered stretches follow at residues 443 to 670 and 894 to 923; these read KTES…SEKT and VAAQTAAKAPPAAPPKDDKPEETAETEEKK. Residues 486 to 501 are compositionally biased toward polar residues; the sequence is EGSVTTEPTEAASTEF. The segment covering 551–587 has biased composition (low complexity); it reads SVASTESVTAVVEESAPVSSVAIEVPAPEASEASAQE. Over residues 630–639 the composition is skewed to acidic residues; that stretch reads KPDEPEESLI. Composition is skewed to low complexity over residues 657-670 and 894-903; these read AAVPEEVAASSEKT and VAAQTAAKAP. Residues 908 to 923 show a composition bias toward basic and acidic residues; that stretch reads PKDDKPEETAETEEKK.

Belongs to the EF-Ts family. Component of the chloroplast ribosome 30S and 70S subunits, as well as polysomes. In terms of assembly, component of the chloroplast ribosome 70S subunit, and at low levels, present in polysomes. As to quaternary structure, associates transiently with chloroplast polysomes.

Its subcellular location is the plastid. The protein localises to the chloroplast. Functionally, associates with the EF-Tu.GDP complex and induces the exchange of GDP to GTP. It remains bound to the aminoacyl-tRNA.EF-Tu.GTP complex up to the GTP hydrolysis stage on the ribosome. Binds to psbD and psbA 5'-untranslated regions (UTRs) in vitro. This Oryza sativa subsp. indica (Rice) protein is Polyprotein of EF-Ts, chloroplastic.